We begin with the raw amino-acid sequence, 392 residues long: O-phospho-L-seryl-tRNA:Cys-tRNA synthase 1 (392 aa).

Pyridoxal 5'-phosphate-binding positions include 85 to 86 (AR), Asn190, and 213 to 215 (SGH). At Lys216 the chain carries N6-(pyridoxal phosphate)lysine.

The protein belongs to the SepCysS family. In terms of assembly, homodimer. Interacts with SepRS. It depends on pyridoxal 5'-phosphate as a cofactor.

The enzyme catalyses O-phospho-L-seryl-tRNA(Cys) + hydrogen sulfide + H(+) = L-cysteinyl-tRNA(Cys) + phosphate. Converts O-phospho-L-seryl-tRNA(Cys) (Sep-tRNA(Cys)) to L-cysteinyl-tRNA(Cys) (Cys-tRNA(Cys)). This chain is O-phospho-L-seryl-tRNA:Cys-tRNA synthase 1, found in Methanocorpusculum labreanum (strain ATCC 43576 / DSM 4855 / Z).